Consider the following 188-residue polypeptide: Ubiquitin-like protein 4B (188 aa).

In terms of domain architecture, Ubiquitin-like spans Met1 to Asp76. Positions Glu146–Gln188 are disordered. Residues Asn161 to Gly174 show a composition bias toward gly residues.

As to expression, expressed specifically in post-meiotic male germ cells of the testis. Abundantly expressed in stage 14-16 spermatids.

The protein localises to the cytoplasm. This Mus musculus (Mouse) protein is Ubiquitin-like protein 4B (Ubl4b).